Here is a 348-residue protein sequence, read N- to C-terminus: uncharacterized protein (348 aa).

May be involved in apoptosis regulation. This is an uncharacterized protein from Mus musculus (Mouse).